The sequence spans 48 residues: Large ribosomal subunit protein bL33A (48 aa).

It belongs to the bacterial ribosomal protein bL33 family.

The protein is Large ribosomal subunit protein bL33A of Shouchella clausii (strain KSM-K16) (Alkalihalobacillus clausii).